The chain runs to 55 residues: Regulatory protein MokB (55 aa).

Functionally, overlapping regulatory peptide whose translation enables hokB expression. In Escherichia coli (strain K12), this protein is Regulatory protein MokB (mokB).